The sequence spans 403 residues: Protein IQ-DOMAIN 23 (403 aa).

Residues 1–43 (MGFFGRLFGSKKKSDKAASSRDKRRWSFTTRSSNSSKRAPAVT) form a disordered region. The Nuclear localization signal motif lies at 10–17 (SKKKSDKA). Residues 27-43 (SFTTRSSNSSKRAPAVT) show a composition bias toward polar residues. The tract at residues 115–133 (QENIAAMKIQSAFRGYLAR) is calmodulin-binding. 2 consecutive IQ domains span residues 116-144 (ENIA…ALVK) and 145-167 (LQAL…RMQT). 3 disordered regions span residues 176–208 (RARA…RSLH), 242–301 (ILEV…PTSR), and 381–403 (GGDS…SFLV). Basic and acidic residues predominate over residues 257-267 (LRSERNNESPR).

This sequence belongs to the IQD family. Binds to multiple calmodulin (CaM) in the presence of Ca(2+) and CaM-like proteins.

The protein localises to the nucleus. The protein resides in the nucleolus. Its subcellular location is the cytoplasm. It localises to the cytoskeleton. It is found in the cell membrane. May be involved in cooperative interactions with calmodulins or calmodulin-like proteins. Recruits calmodulin proteins to microtubules, thus being a potential scaffold in cellular signaling and trafficking. May associate with nucleic acids and regulate gene expression at the transcriptional or post-transcriptional level. The protein is Protein IQ-DOMAIN 23 of Arabidopsis thaliana (Mouse-ear cress).